Reading from the N-terminus, the 243-residue chain is DNA repair protein RecO (243 aa).

Belongs to the RecO family.

Involved in DNA repair and RecF pathway recombination. The sequence is that of DNA repair protein RecO from Beutenbergia cavernae (strain ATCC BAA-8 / DSM 12333 / CCUG 43141 / JCM 11478 / NBRC 16432 / NCIMB 13614 / HKI 0122).